The primary structure comprises 286 residues: ATP synthase gamma chain (286 aa).

Belongs to the ATPase gamma chain family. As to quaternary structure, F-type ATPases have 2 components, CF(1) - the catalytic core - and CF(0) - the membrane proton channel. CF(1) has five subunits: alpha(3), beta(3), gamma(1), delta(1), epsilon(1). CF(0) has three main subunits: a, b and c.

It is found in the cell inner membrane. In terms of biological role, produces ATP from ADP in the presence of a proton gradient across the membrane. The gamma chain is believed to be important in regulating ATPase activity and the flow of protons through the CF(0) complex. In Shewanella sp. (strain MR-4), this protein is ATP synthase gamma chain.